The sequence spans 287 residues: ATP synthase gamma chain (287 aa).

Belongs to the ATPase gamma chain family. F-type ATPases have 2 components, CF(1) - the catalytic core - and CF(0) - the membrane proton channel. CF(1) has five subunits: alpha(3), beta(3), gamma(1), delta(1), epsilon(1). CF(0) has three main subunits: a, b and c.

It localises to the cell inner membrane. Its function is as follows. Produces ATP from ADP in the presence of a proton gradient across the membrane. The gamma chain is believed to be important in regulating ATPase activity and the flow of protons through the CF(0) complex. The polypeptide is ATP synthase gamma chain (Yersinia enterocolitica serotype O:8 / biotype 1B (strain NCTC 13174 / 8081)).